The following is a 454-amino-acid chain: MHGPTSKAISRNVRSVKRPRRAPRPVVSTQAMNKLSNVTLSAEQEKLRERVLSFMRSNLSQYKSDWKHPAMFVIQGDAGTGKSVILNSLFNEIQKLSQFSPSSEDILHGTHNYLVVNHPEMLKLYIRISDSFKYISKSSLERPTSLINNLQKRKVMADVVIVDEAHLLATSKDAFKRFYGENHLKDLMSLCKVLVLVYDDKQALRMGSYWDEGSNNGATLKDFYNEIPPKSRDWYTLKQQFRVAAPQNVLNWIDQISVAGKIPPIESVLSKGNADCADDKIKNFDFKIWDDCGAMYEAIKEKDRQYGQCRMLSTYDFPYRLDGKDYYVECGDNFKVRWDRYTPREVTPWSERCDTIDEVGSVYTIQGFDLNYAGVILGRSIGYDAANDCIKLRPELYDDRAGFTKKKNIHNAEDVKQKIIMNSINVLLTRGVRGLYVYAYDPELRERLLRPSKK.

A disordered region spans residues 1-25 (MHGPTSKAISRNVRSVKRPRRAPRP). Basic residues predominate over residues 14–23 (RSVKRPRRAP).

It localises to the cytoplasm. Its subcellular location is the nucleus. This is an uncharacterized protein from Saccharomyces cerevisiae (strain ATCC 204508 / S288c) (Baker's yeast).